Consider the following 307-residue polypeptide: Elongation factor Ts (307 aa).

Residues 79 to 82 (TDFV) are involved in Mg(2+) ion dislocation from EF-Tu.

It belongs to the EF-Ts family.

The protein resides in the cytoplasm. Functionally, associates with the EF-Tu.GDP complex and induces the exchange of GDP to GTP. It remains bound to the aminoacyl-tRNA.EF-Tu.GTP complex up to the GTP hydrolysis stage on the ribosome. The polypeptide is Elongation factor Ts (Sinorhizobium medicae (strain WSM419) (Ensifer medicae)).